Here is a 598-residue protein sequence, read N- to C-terminus: Elongation factor 4 (598 aa).

The tr-type G domain occupies 2 to 184 (KNIRNFSIIA…EIVHKIPAPE (183 aa)). GTP is bound by residues 14–19 (DHGKST) and 131–134 (NKID).

This sequence belongs to the TRAFAC class translation factor GTPase superfamily. Classic translation factor GTPase family. LepA subfamily.

It localises to the cell inner membrane. It catalyses the reaction GTP + H2O = GDP + phosphate + H(+). Its function is as follows. Required for accurate and efficient protein synthesis under certain stress conditions. May act as a fidelity factor of the translation reaction, by catalyzing a one-codon backward translocation of tRNAs on improperly translocated ribosomes. Back-translocation proceeds from a post-translocation (POST) complex to a pre-translocation (PRE) complex, thus giving elongation factor G a second chance to translocate the tRNAs correctly. Binds to ribosomes in a GTP-dependent manner. The polypeptide is Elongation factor 4 (Pasteurella multocida (strain Pm70)).